Here is a 499-residue protein sequence, read N- to C-terminus: Phenylalanine--tRNA ligase alpha subunit (499 aa).

L-phenylalanine contacts are provided by residues threonine 342, 381-383, and phenylalanine 422; that span reads QID. Glutamate 424 is a Mg(2+) binding site. Phenylalanine 447 lines the L-phenylalanine pocket.

Belongs to the class-II aminoacyl-tRNA synthetase family. Phe-tRNA synthetase alpha subunit type 2 subfamily. Tetramer of two alpha and two beta subunits. Mg(2+) serves as cofactor.

The protein resides in the cytoplasm. The catalysed reaction is tRNA(Phe) + L-phenylalanine + ATP = L-phenylalanyl-tRNA(Phe) + AMP + diphosphate + H(+). The sequence is that of Phenylalanine--tRNA ligase alpha subunit from Pyrococcus furiosus (strain ATCC 43587 / DSM 3638 / JCM 8422 / Vc1).